We begin with the raw amino-acid sequence, 444 residues long: 23S rRNA (uracil(1939)-C(5))-methyltransferase RlmD (444 aa).

The region spanning 5-67 (RNRFDRTPFQ…RHFDEAKTVE (63 aa)) is the TRAM domain. Residues Cys80, Cys86, Cys89, and Cys168 each coordinate [4Fe-4S] cluster. S-adenosyl-L-methionine is bound by residues Gln276, Phe305, Asn310, Glu326, Asp353, and Asp374. Cys400 acts as the Nucleophile in catalysis.

Belongs to the class I-like SAM-binding methyltransferase superfamily. RNA M5U methyltransferase family. RlmD subfamily.

It carries out the reaction uridine(1939) in 23S rRNA + S-adenosyl-L-methionine = 5-methyluridine(1939) in 23S rRNA + S-adenosyl-L-homocysteine + H(+). Catalyzes the formation of 5-methyl-uridine at position 1939 (m5U1939) in 23S rRNA. The polypeptide is 23S rRNA (uracil(1939)-C(5))-methyltransferase RlmD (Xanthomonas oryzae pv. oryzae (strain KACC10331 / KXO85)).